A 419-amino-acid chain; its full sequence is UDP-N-acetylglucosamine 1-carboxyvinyltransferase 2 (419 aa).

22 to 23 (KN) lines the phosphoenolpyruvate pocket. R92 is a UDP-N-acetyl-alpha-D-glucosamine binding site. Catalysis depends on C116, which acts as the Proton donor. C116 bears the 2-(S-cysteinyl)pyruvic acid O-phosphothioketal mark. UDP-N-acetyl-alpha-D-glucosamine-binding positions include 121 to 125 (RPIDL), D306, and I328.

This sequence belongs to the EPSP synthase family. MurA subfamily.

Its subcellular location is the cytoplasm. It catalyses the reaction phosphoenolpyruvate + UDP-N-acetyl-alpha-D-glucosamine = UDP-N-acetyl-3-O-(1-carboxyvinyl)-alpha-D-glucosamine + phosphate. Its pathway is cell wall biogenesis; peptidoglycan biosynthesis. In terms of biological role, cell wall formation. Adds enolpyruvyl to UDP-N-acetylglucosamine. The sequence is that of UDP-N-acetylglucosamine 1-carboxyvinyltransferase 2 from Streptococcus pyogenes serotype M18 (strain MGAS8232).